A 244-amino-acid chain; its full sequence is 1-(5-phosphoribosyl)-5-[(5-phosphoribosylamino)methylideneamino] imidazole-4-carboxamide isomerase (244 aa).

Asp13 (proton acceptor) is an active-site residue. Asp132 acts as the Proton donor in catalysis.

This sequence belongs to the HisA/HisF family.

The protein resides in the cytoplasm. The catalysed reaction is 1-(5-phospho-beta-D-ribosyl)-5-[(5-phospho-beta-D-ribosylamino)methylideneamino]imidazole-4-carboxamide = 5-[(5-phospho-1-deoxy-D-ribulos-1-ylimino)methylamino]-1-(5-phospho-beta-D-ribosyl)imidazole-4-carboxamide. It participates in amino-acid biosynthesis; L-histidine biosynthesis; L-histidine from 5-phospho-alpha-D-ribose 1-diphosphate: step 4/9. This Renibacterium salmoninarum (strain ATCC 33209 / DSM 20767 / JCM 11484 / NBRC 15589 / NCIMB 2235) protein is 1-(5-phosphoribosyl)-5-[(5-phosphoribosylamino)methylideneamino] imidazole-4-carboxamide isomerase.